The sequence spans 173 residues: Pyridoxal 5'-phosphate synthase subunit PdxT (173 aa).

L-glutamine is bound at residue 49–51 (GES). Cysteine 81 serves as the catalytic Nucleophile. Residues arginine 113 and 141–142 (IR) contribute to the L-glutamine site.

This sequence belongs to the glutaminase PdxT/SNO family. In terms of assembly, in the presence of PdxS, forms a dodecamer of heterodimers. Only shows activity in the heterodimer.

It carries out the reaction aldehydo-D-ribose 5-phosphate + D-glyceraldehyde 3-phosphate + L-glutamine = pyridoxal 5'-phosphate + L-glutamate + phosphate + 3 H2O + H(+). The catalysed reaction is L-glutamine + H2O = L-glutamate + NH4(+). Its pathway is cofactor biosynthesis; pyridoxal 5'-phosphate biosynthesis. Catalyzes the hydrolysis of glutamine to glutamate and ammonia as part of the biosynthesis of pyridoxal 5'-phosphate. The resulting ammonia molecule is channeled to the active site of PdxS. This is Pyridoxal 5'-phosphate synthase subunit PdxT from Mycolicibacterium paratuberculosis (strain ATCC BAA-968 / K-10) (Mycobacterium paratuberculosis).